A 303-amino-acid chain; its full sequence is Ornithine carbamoyltransferase (303 aa).

Carbamoyl phosphate-binding positions include 52–55 (STRT), Q79, R103, and 130–133 (HPCQ). Residues N161, D222, and 226-227 (SM) contribute to the L-ornithine site. Carbamoyl phosphate is bound by residues 262–263 (CL) and R290.

Belongs to the aspartate/ornithine carbamoyltransferase superfamily. OTCase family.

It localises to the cytoplasm. The catalysed reaction is carbamoyl phosphate + L-ornithine = L-citrulline + phosphate + H(+). Its pathway is amino-acid biosynthesis; L-arginine biosynthesis; L-arginine from L-ornithine and carbamoyl phosphate: step 1/3. In terms of biological role, reversibly catalyzes the transfer of the carbamoyl group from carbamoyl phosphate (CP) to the N(epsilon) atom of ornithine (ORN) to produce L-citrulline. This chain is Ornithine carbamoyltransferase, found in Geobacter sulfurreducens (strain ATCC 51573 / DSM 12127 / PCA).